Consider the following 97-residue polypeptide: MKEKHQIVIWPVYLDANKARNEGRLTPMSCSVKTPRVMEIFKAAEKLGLHPEHVTGKAHPAAWADKSGYVLVDNIGPKTDLLRRIGTEIIRMRGGKQ.

It belongs to the SRP19 family. Part of the signal recognition particle protein translocation system, which is composed of SRP and FtsY. Archaeal SRP consists of a 7S RNA molecule of 300 nucleotides and two protein subunits: SRP54 and SRP19.

The protein localises to the cytoplasm. Its function is as follows. Involved in targeting and insertion of nascent membrane proteins into the cytoplasmic membrane. Binds directly to 7S RNA and mediates binding of the 54 kDa subunit of the SRP. The protein is Signal recognition particle 19 kDa protein of Methanocella arvoryzae (strain DSM 22066 / NBRC 105507 / MRE50).